A 60-amino-acid polypeptide reads, in one-letter code: UPF0291 protein Nther_1806 (60 aa).

It belongs to the UPF0291 family.

The protein localises to the cytoplasm. The sequence is that of UPF0291 protein Nther_1806 from Natranaerobius thermophilus (strain ATCC BAA-1301 / DSM 18059 / JW/NM-WN-LF).